A 456-amino-acid chain; its full sequence is tRNA modification GTPase MnmE (456 aa).

R23, E85, and R124 together coordinate (6S)-5-formyl-5,6,7,8-tetrahydrofolate. In terms of domain architecture, TrmE-type G spans 220 to 375 (GLRVLIFGKP…LVSAIQERFV (156 aa)). N230 is a K(+) binding site. GTP-binding positions include 230-235 (NVGKSS), 249-255 (TDIPGTT), and 274-277 (DTAG). S234 is a Mg(2+) binding site. K(+)-binding residues include T249, I251, and T254. T255 is a binding site for Mg(2+). K456 contacts (6S)-5-formyl-5,6,7,8-tetrahydrofolate.

The protein belongs to the TRAFAC class TrmE-Era-EngA-EngB-Septin-like GTPase superfamily. TrmE GTPase family. In terms of assembly, homodimer. Heterotetramer of two MnmE and two MnmG subunits. It depends on K(+) as a cofactor.

Its subcellular location is the cytoplasm. In terms of biological role, exhibits a very high intrinsic GTPase hydrolysis rate. Involved in the addition of a carboxymethylaminomethyl (cmnm) group at the wobble position (U34) of certain tRNAs, forming tRNA-cmnm(5)s(2)U34. This chain is tRNA modification GTPase MnmE, found in Syntrophotalea carbinolica (strain DSM 2380 / NBRC 103641 / GraBd1) (Pelobacter carbinolicus).